The following is a 61-amino-acid chain: Probable tautomerase SMU_1087 (61 aa).

The Proton acceptor; via imino nitrogen role is filled by proline 2.

The protein belongs to the 4-oxalocrotonate tautomerase family.

This Streptococcus mutans serotype c (strain ATCC 700610 / UA159) protein is Probable tautomerase SMU_1087.